A 527-amino-acid polypeptide reads, in one-letter code: Glutamate--cysteine ligase (527 aa).

Belongs to the glutamate--cysteine ligase type 1 family. Type 1 subfamily.

The enzyme catalyses L-cysteine + L-glutamate + ATP = gamma-L-glutamyl-L-cysteine + ADP + phosphate + H(+). It functions in the pathway sulfur metabolism; glutathione biosynthesis; glutathione from L-cysteine and L-glutamate: step 1/2. This chain is Glutamate--cysteine ligase, found in Pseudomonas aeruginosa (strain UCBPP-PA14).